A 281-amino-acid chain; its full sequence is Insulin-like growth factor-binding protein 2 (281 aa).

The signal sequence occupies residues 1 to 21 (MVLSEHLLVLLGAVLCAPALS). The 84-residue stretch at 23–106 (VLFRCPPCSP…VLGLGTCGKR (84 aa)) folds into the IGFBP N-terminal domain. 6 cysteine pairs are disulfide-bonded: Cys-27/Cys-56, Cys-30/Cys-58, Cys-38/Cys-59, Cys-47/Cys-62, Cys-70/Cys-83, and Cys-77/Cys-103. Disordered stretches follow at residues 107–127 (RDAE…DQSD) and 139–180 (PAVP…RPAR). Over residues 156 to 176 (VNRERANEQHRSKTNKSEDKK) the composition is skewed to basic and acidic residues. The 83-residue stretch at 180-262 (RSLCQLQLDQ…SPTVRGDPEC (83 aa)) folds into the Thyroglobulin type-1 domain. 3 disulfide bridges follow: Cys-183-Cys-217, Cys-228-Cys-239, and Cys-241-Cys-262. Positions 257-259 (RGD) match the Cell attachment site motif.

As to quaternary structure, interacts with igf1 and igf2.

It is found in the secreted. In terms of biological role, IGF-binding proteins prolong the half-life of the IGFs and have been shown to either inhibit or stimulate the growth promoting effects of the IGFs on cell culture. They alter the interaction of IGFs with their cell surface receptors. This chain is Insulin-like growth factor-binding protein 2 (igfbp2), found in Xenopus laevis (African clawed frog).